We begin with the raw amino-acid sequence, 30 residues long: Varv peptide H (30 aa).

The segment at residues G1–N30 is a cross-link (cyclopeptide (Gly-Asn)). Disulfide bonds link C5–C19, C9–C21, and C14–C27.

Post-translationally, this is a cyclic peptide.

In terms of biological role, probably participates in a plant defense mechanism. This is Varv peptide H from Viola arvensis (European field pansy).